Reading from the N-terminus, the 358-residue chain is Holliday junction branch migration complex subunit RuvB (358 aa).

Positions 1–24 (MSIQTDDFAAPPPKRILSGAPASP) are disordered. The tract at residues 5 to 194 (TDDFAAPPPK…FGIVARLEFY (190 aa)) is large ATPase domain (RuvB-L). Residues Leu-33, Arg-34, Gly-75, Lys-78, Thr-79, Thr-80, 141-143 (EDY), Arg-184, Tyr-194, and Arg-231 contribute to the ATP site. Position 79 (Thr-79) interacts with Mg(2+). Positions 195 to 265 (SPEELASIVR…IAHRALVMLD (71 aa)) are small ATPAse domain (RuvB-S). The interval 268–358 (PQGFDLMDRK…GDMFGAMRPE (91 aa)) is head domain (RuvB-H). Arg-304, Arg-323, and Arg-328 together coordinate DNA.

It belongs to the RuvB family. Homohexamer. Forms an RuvA(8)-RuvB(12)-Holliday junction (HJ) complex. HJ DNA is sandwiched between 2 RuvA tetramers; dsDNA enters through RuvA and exits via RuvB. An RuvB hexamer assembles on each DNA strand where it exits the tetramer. Each RuvB hexamer is contacted by two RuvA subunits (via domain III) on 2 adjacent RuvB subunits; this complex drives branch migration. In the full resolvosome a probable DNA-RuvA(4)-RuvB(12)-RuvC(2) complex forms which resolves the HJ.

The protein localises to the cytoplasm. It carries out the reaction ATP + H2O = ADP + phosphate + H(+). Its function is as follows. The RuvA-RuvB-RuvC complex processes Holliday junction (HJ) DNA during genetic recombination and DNA repair, while the RuvA-RuvB complex plays an important role in the rescue of blocked DNA replication forks via replication fork reversal (RFR). RuvA specifically binds to HJ cruciform DNA, conferring on it an open structure. The RuvB hexamer acts as an ATP-dependent pump, pulling dsDNA into and through the RuvAB complex. RuvB forms 2 homohexamers on either side of HJ DNA bound by 1 or 2 RuvA tetramers; 4 subunits per hexamer contact DNA at a time. Coordinated motions by a converter formed by DNA-disengaged RuvB subunits stimulates ATP hydrolysis and nucleotide exchange. Immobilization of the converter enables RuvB to convert the ATP-contained energy into a lever motion, pulling 2 nucleotides of DNA out of the RuvA tetramer per ATP hydrolyzed, thus driving DNA branch migration. The RuvB motors rotate together with the DNA substrate, which together with the progressing nucleotide cycle form the mechanistic basis for DNA recombination by continuous HJ branch migration. Branch migration allows RuvC to scan DNA until it finds its consensus sequence, where it cleaves and resolves cruciform DNA. This Albidiferax ferrireducens (strain ATCC BAA-621 / DSM 15236 / T118) (Rhodoferax ferrireducens) protein is Holliday junction branch migration complex subunit RuvB.